The following is a 191-amino-acid chain: GDP-mannose pyrophosphatase (191 aa).

GDP-alpha-D-mannose is bound by residues Tyr17, 38–40 (KRE), Arg67, and 85–87 (AGL). Residues 43–180 (DRGNGATILL…EIRDGKTVLL (138 aa)) form the Nudix hydrolase domain. Mg(2+) contacts are provided by Ala85, Glu100, and Glu104. Residues 86-106 (GLLDNDEPEVCIRKEAIEETG) carry the Nudix box motif. Residues Glu104, Glu127, 150–151 (DE), and Lys176 contribute to the GDP-alpha-D-mannose site. Residue Glu151 participates in Mg(2+) binding.

The protein belongs to the Nudix hydrolase family. NudK subfamily. In terms of assembly, homodimer. It depends on Mg(2+) as a cofactor.

The enzyme catalyses GDP-alpha-D-mannose + H2O = alpha-D-mannose 1-phosphate + GMP + 2 H(+). Functionally, nucleoside diphosphate sugar hydrolase that hydrolyzes GDP-mannose as its preferred substrate, yielding GMP and mannose-1-phosphate. This is GDP-mannose pyrophosphatase (nudK) from Escherichia coli (strain UTI89 / UPEC).